We begin with the raw amino-acid sequence, 160 residues long: Ribosomal RNA large subunit methyltransferase H (160 aa).

S-adenosyl-L-methionine-binding residues include L76 and G108.

This sequence belongs to the RNA methyltransferase RlmH family. As to quaternary structure, homodimer.

The protein localises to the cytoplasm. It carries out the reaction pseudouridine(1915) in 23S rRNA + S-adenosyl-L-methionine = N(3)-methylpseudouridine(1915) in 23S rRNA + S-adenosyl-L-homocysteine + H(+). Its function is as follows. Specifically methylates the pseudouridine at position 1915 (m3Psi1915) in 23S rRNA. In Xanthobacter autotrophicus (strain ATCC BAA-1158 / Py2), this protein is Ribosomal RNA large subunit methyltransferase H.